We begin with the raw amino-acid sequence, 220 residues long: Small ribosomal subunit protein uS3 (220 aa).

In terms of domain architecture, KH type-2 spans 39 to 107; it reads IREHVEGRLK…RVHINISEIK (69 aa).

The protein belongs to the universal ribosomal protein uS3 family. As to quaternary structure, part of the 30S ribosomal subunit. Forms a tight complex with proteins S10 and S14.

Binds the lower part of the 30S subunit head. Binds mRNA in the 70S ribosome, positioning it for translation. This chain is Small ribosomal subunit protein uS3, found in Shouchella clausii (strain KSM-K16) (Alkalihalobacillus clausii).